We begin with the raw amino-acid sequence, 493 residues long: Proline--tRNA ligase (493 aa).

This sequence belongs to the class-II aminoacyl-tRNA synthetase family. ProS type 3 subfamily. Homodimer.

The protein resides in the cytoplasm. It catalyses the reaction tRNA(Pro) + L-proline + ATP = L-prolyl-tRNA(Pro) + AMP + diphosphate. Functionally, catalyzes the attachment of proline to tRNA(Pro) in a two-step reaction: proline is first activated by ATP to form Pro-AMP and then transferred to the acceptor end of tRNA(Pro). The protein is Proline--tRNA ligase of Porphyromonas gingivalis (strain ATCC 33277 / DSM 20709 / CIP 103683 / JCM 12257 / NCTC 11834 / 2561).